A 479-amino-acid chain; its full sequence is Trigger factor (479 aa).

The PPIase FKBP-type domain occupies 174–261 (GDIAVVSFSG…LKELKTRELP (88 aa)). The interval 437-479 (KVLESEAKTSKPAAKSKGSKTKSTKTKTNKAKTEKPASDKTKS) is disordered. Positions 453 to 466 (KGSKTKSTKTKTNK) are enriched in basic residues. A compositionally biased stretch (basic and acidic residues) spans 467 to 479 (AKTEKPASDKTKS).

This sequence belongs to the FKBP-type PPIase family. Tig subfamily.

It localises to the cytoplasm. It carries out the reaction [protein]-peptidylproline (omega=180) = [protein]-peptidylproline (omega=0). Its function is as follows. Involved in protein export. Acts as a chaperone by maintaining the newly synthesized protein in an open conformation. Functions as a peptidyl-prolyl cis-trans isomerase. In Prochlorococcus marinus (strain MIT 9303), this protein is Trigger factor.